The following is a 308-amino-acid chain: Baculoviral IAP repeat-containing protein bir-2 (308 aa).

2 BIR repeats span residues Arg-27–Met-98 and Arg-170–Lys-241. The Zn(2+) site is built by Cys-68, Cys-71, His-87, Cys-94, Cys-211, Cys-214, His-230, and Cys-237.

It belongs to the IAP family.

This chain is Baculoviral IAP repeat-containing protein bir-2, found in Caenorhabditis elegans.